The following is a 776-amino-acid chain: Protein STRUBBELIG-RECEPTOR FAMILY 3 (776 aa).

A signal peptide spans 1-29 (MAAKRSIYCLLLLPLLLSLLIWIPSISLA). At 30–35 (ATNPDD) the chain is on the cytoplasmic side. A helical transmembrane segment spans residues 36 to 56 (VAAINGLFAALGAPVLPGWIA). Topologically, residues 57 to 316 (SGGDPCGEAW…KGKNSSHTKK (260 aa)) are extracellular. Asparagine 72 carries an N-linked (GlcNAc...) asparagine glycan. LRR repeat units follow at residues 99–120 (SIRG…TLPV), 121–143 (TLQH…LGTL), 145–167 (FLND…FQNL), 169–191 (GLIN…MENL), 193–215 (TLTT…QGLP), and 216–236 (LQDL…KLLS). N-linked (GlcNAc...) asparagine glycosylation occurs at asparagine 179. N-linked (GlcNAc...) asparagine glycans are attached at residues asparagine 248 and asparagine 253. Residues 251-311 (MINSTSTAPS…SSENSKGKNS (61 aa)) form a disordered region. Low complexity predominate over residues 254–268 (STSTAPSLSPSLSPT). Positions 269–284 (KPAPTRPFSGVPPPPN) are enriched in pro residues. Low complexity predominate over residues 298 to 309 (SEGSSSENSKGK). Asparagine 310 is a glycosylation site (N-linked (GlcNAc...) asparagine). The helical transmembrane segment at 317-337 (IILIAFAGVLVFIILVLAILL) threads the bilayer. The Cytoplasmic portion of the chain corresponds to 338–776 (LLPKCARRRE…RHGSGDSTAD (439 aa)). The interval 355-440 (PHQVGADRGS…PPPPPPPPPP (86 aa)) is disordered. A compositionally biased stretch (basic and acidic residues) spans 381 to 407 (RSEKVQREPFKKAGEEPKVLHDLERLR). A compositionally biased stretch (pro residues) spans 426–440 (MPPPPPPPPPPPPPP). A Protein kinase domain is found at 485–763 (FAQENLIGSG…EVVQDLLDMI (279 aa)). Residues 491-499 (IGSGMLGSV) and lysine 513 contribute to the ATP site.

It belongs to the protein kinase superfamily. Ser/Thr protein kinase family. Expressed in seedlings, roots, stems, leaves, flowers and siliques.

Its subcellular location is the membrane. Functionally, not essential for epidermal patterning and not redundant with STRUBBELIG. The protein is Protein STRUBBELIG-RECEPTOR FAMILY 3 (SRF3) of Arabidopsis thaliana (Mouse-ear cress).